The following is a 79-amino-acid chain: Acyl carrier protein (79 aa).

A Carrier domain is found at 2–77 (STIEERVKKI…QAIDYVKVHV (76 aa)). At Ser-37 the chain carries O-(pantetheine 4'-phosphoryl)serine.

It belongs to the acyl carrier protein (ACP) family. 4'-phosphopantetheine is transferred from CoA to a specific serine of apo-ACP by AcpS. This modification is essential for activity because fatty acids are bound in thioester linkage to the sulfhydryl of the prosthetic group.

The protein resides in the cytoplasm. It functions in the pathway lipid metabolism; fatty acid biosynthesis. Its function is as follows. Carrier of the growing fatty acid chain in fatty acid biosynthesis. This chain is Acyl carrier protein, found in Xanthomonas albilineans.